The primary structure comprises 220 residues: 7-cyano-7-deazaguanine synthase (220 aa).

ATP is bound at residue 10–20 (FSGGQDSTTCL). Zn(2+)-binding residues include Cys186, Cys195, Cys198, and Cys201.

It belongs to the QueC family. Homodimer. It depends on Zn(2+) as a cofactor.

It carries out the reaction 7-carboxy-7-deazaguanine + NH4(+) + ATP = 7-cyano-7-deazaguanine + ADP + phosphate + H2O + H(+). Its pathway is purine metabolism; 7-cyano-7-deazaguanine biosynthesis. Functionally, catalyzes the ATP-dependent conversion of 7-carboxy-7-deazaguanine (CDG) to 7-cyano-7-deazaguanine (preQ(0)). This chain is 7-cyano-7-deazaguanine synthase, found in Bacillus cereus (strain ATCC 14579 / DSM 31 / CCUG 7414 / JCM 2152 / NBRC 15305 / NCIMB 9373 / NCTC 2599 / NRRL B-3711).